The sequence spans 794 residues: uncharacterized protein (794 aa).

The first 22 residues, Met-1 to Ala-22, serve as a signal peptide directing secretion. Cys-23 is lipidated: N-palmitoyl cysteine. Cys-23 is lipidated: S-diacylglycerol cysteine. 2 stretches are compositionally biased toward polar residues: residues Thr-182 to Val-200 and Gln-245 to Gln-261. Disordered regions lie at residues Thr-182–Lys-208, Asn-222–Gln-261, Phe-474–Gly-529, Ser-566–Lys-594, and Lys-737–Gln-757. Over residues Lys-475–Gly-501 the composition is skewed to low complexity. Residues Gly-511–Gly-526 are compositionally biased toward polar residues. Residues Ala-567–Gly-576 are compositionally biased toward basic and acidic residues. The segment covering Glu-577 to Gln-593 has biased composition (polar residues). Positions Lys-737–Ser-751 are enriched in basic and acidic residues.

Belongs to the MG185/MG260 family.

It is found in the cell membrane. This is an uncharacterized protein from Mycoplasma pneumoniae (strain ATCC 29342 / M129 / Subtype 1) (Mycoplasmoides pneumoniae).